A 461-amino-acid polypeptide reads, in one-letter code: Aspartyl/glutamyl-tRNA(Asn/Gln) amidotransferase subunit B (461 aa).

The protein belongs to the GatB/GatE family. GatB subfamily. As to quaternary structure, heterotrimer of A, B and C subunits.

The enzyme catalyses L-glutamyl-tRNA(Gln) + L-glutamine + ATP + H2O = L-glutaminyl-tRNA(Gln) + L-glutamate + ADP + phosphate + H(+). The catalysed reaction is L-aspartyl-tRNA(Asn) + L-glutamine + ATP + H2O = L-asparaginyl-tRNA(Asn) + L-glutamate + ADP + phosphate + 2 H(+). Its function is as follows. Allows the formation of correctly charged Asn-tRNA(Asn) or Gln-tRNA(Gln) through the transamidation of misacylated Asp-tRNA(Asn) or Glu-tRNA(Gln) in organisms which lack either or both of asparaginyl-tRNA or glutaminyl-tRNA synthetases. The reaction takes place in the presence of glutamine and ATP through an activated phospho-Asp-tRNA(Asn) or phospho-Glu-tRNA(Gln). The chain is Aspartyl/glutamyl-tRNA(Asn/Gln) amidotransferase subunit B from Methanopyrus kandleri (strain AV19 / DSM 6324 / JCM 9639 / NBRC 100938).